The primary structure comprises 440 residues: Beta-1,3-galactosyl-O-glycosyl-glycoprotein beta-1,6-N-acetylglucosaminyltransferase (440 aa).

Topologically, residues 1-9 (MKMAGWKKK) are cytoplasmic. A helical; Signal-anchor for type II membrane protein membrane pass occupies residues 10–30 (LCPGHHLWALGCYMLLAVVSL). The Lumenal segment spans residues 31–440 (RLSLRFKCDV…RHKAIYGTEL (410 aa)). Residues Asn72 and Asn108 are each glycosylated (N-linked (GlcNAc...) asparagine; by host). 4 disulfides stabilise this stretch: Cys73–Cys230, Cys164–Cys384, Cys185–Cys212, and Cys393–Cys425.

The protein belongs to the glycosyltransferase 14 family.

It localises to the host Golgi apparatus membrane. The catalysed reaction is a 3-O-[beta-D-galactosyl-(1-&gt;3)-N-acetyl-alpha-D-galactosaminyl]-L-seryl-[protein] + UDP-N-acetyl-alpha-D-glucosamine = 3-O-{beta-D-galactosyl-(1-&gt;3)-[N-acetyl-beta-D-glucosaminyl-(1-&gt;6)]-N-acetyl-alpha-D-galactosaminyl}-L-seryl-[protein] + UDP + H(+). The enzyme catalyses a 3-O-[beta-D-galactosyl-(1-&gt;3)-N-acetyl-alpha-D-galactosaminyl]-L-threonyl-[protein] + UDP-N-acetyl-alpha-D-glucosamine = a 3-O-{beta-D-galactosyl-(1-&gt;3)-[N-acetyl-beta-D-glucosaminyl-(1-&gt;6)]-N-acetyl-alpha-D-galactosaminyl}-L-threonyl-[protein] + UDP + H(+). It carries out the reaction a beta-D-Gal-(1-&gt;4)-beta-D-GlcNAc-(1-&gt;3)-beta-D-Gal-(1-&gt;4)-beta-D-GlcNAc derivative + UDP-N-acetyl-alpha-D-glucosamine = a beta-D-Gal-(1-&gt;4)-beta-D-GlcNAc-(1-&gt;3)-[beta-D-GlcNAc-(1-&gt;6)]-beta-D-Gal-(1-&gt;4)-N-acetyl-beta-D-glucosaminyl derivative + UDP + H(+). It catalyses the reaction 3-O-[N-acetyl-beta-D-glucosaminyl-(1-&gt;3)-N-acetyl-alpha-D-galactosaminyl]-L-seryl-[protein] + UDP-N-acetyl-alpha-D-glucosamine = 3-O-[N-acetyl-beta-D-glucosaminyl-(1-&gt;3)-[N-acetyl-beta-D-glucosaminyl-(1-&gt;6)]-N-acetyl-alpha-D-galactosaminyl]-L-seryl-[protein] + UDP + H(+). The catalysed reaction is a 3-O-[N-acetyl-beta-D-glucosaminyl-(1-&gt;3)-N-acetyl-alpha-D-galactosaminyl]-L-threonyl-[protein] + UDP-N-acetyl-alpha-D-glucosamine = 3-O-[N-acetyl-beta-D-glucosaminyl-(1-&gt;3)-[N-acetyl-beta-D-glucosaminyl-(1-&gt;6)]-N-acetyl-alpha-D-galactosaminyl]-L-threonyl-[protein] + UDP + H(+). Its pathway is protein modification; protein glycosylation. Non-essential glycosyltransferase that can synthesize all known mucin beta 6 N-acetylglucosaminides. Mediates core 2 and core 4 O-glycan branching, 2 important steps in mucin-type biosynthesis. Has also I-branching enzyme activity by converting linear into branched poly-N-acetyllactosaminoglycans. Contributes to the post-translational modifications of structural proteins. The polypeptide is Beta-1,3-galactosyl-O-glycosyl-glycoprotein beta-1,6-N-acetylglucosaminyltransferase (Bo17) (Bovine herpesvirus 4 (strain LVR140) (BoHV-4)).